Here is a 294-residue protein sequence, read N- to C-terminus: HTH-type transcriptional regulator ClcR (294 aa).

The HTH lysR-type domain occupies 1 to 58; sequence MEFRQLRYFIAVAEEGNIGAAARRLHISQPPITRQIQALEQDLGVVLFERTHRGVELT. Positions 18 to 37 form a DNA-binding region, H-T-H motif; it reads IGAAARRLHISQPPITRQIQ.

Belongs to the LysR transcriptional regulatory family.

Its subcellular location is the cytoplasm. Its function is as follows. Involved in regulation of chlorinated catechol metabolism. Transcriptional activator of the clcABD chlorocatechol oxidative operon. The polypeptide is HTH-type transcriptional regulator ClcR (clcR) (Pseudomonas putida (Arthrobacter siderocapsulatus)).